A 141-amino-acid polypeptide reads, in one-letter code: Photosystem I reaction center subunit IV A, chloroplastic (141 aa).

The transit peptide at 1-49 directs the protein to the chloroplast; sequence MASCNMASAASNFLVATPNVASNTNTSRTTMLFFSSKNYGSTAPRLVVR. Residues 57–73 are compositionally biased toward low complexity; the sequence is PAAAATAEPAEAPVKAA. The tract at residues 57–83 is disordered; the sequence is PAAAATAEPAEAPVKAAKPPPIGPKRG.

Belongs to the PsaE family. In terms of processing, 2 isoforms exists (ratio 1:1). With or without the N-terminal alanine.

Its subcellular location is the plastid. It is found in the chloroplast thylakoid membrane. In terms of biological role, stabilizes the interaction between PsaC and the PSI core, assists the docking of the ferredoxin to PSI and interacts with ferredoxin-NADP oxidoreductase. In Nicotiana sylvestris (Wood tobacco), this protein is Photosystem I reaction center subunit IV A, chloroplastic (PSAEA).